The sequence spans 1115 residues: Disheveled-associated activator of morphogenesis 2 (1115 aa).

One can recognise a GBD/FH3 domain in the interval glycine 40–valine 416. Residues methionine 434–serine 515 are a coiled coil. 2 disordered regions span residues arginine 510–leucine 605 and glutamine 655–glycine 697. The FH1 domain maps to proline 518–serine 694. The segment covering leucine 540–histidine 583 has biased composition (pro residues). Residues lysine 595–methionine 1042 enclose the FH2 domain. One can recognise a DAD domain in the interval glutamate 1065–lysine 1095.

The protein belongs to the formin homology family. As to quaternary structure, interacts with DVL3. Interacts with INF2. As to expression, in early embryogenesis, expression is confined to embryonic ectoderm. Highly dynamic expression in later stages of gastrulation. In early somite stages, detected in posterior node and persists until 9-10 somites have developed when expression is concentrated in the chordoneural hinge. During organogenesis, expressed in the CNS, PNS, liver primordia, limb buds and genital tubercle.

Functionally, key regulator of the Wnt signaling pathway, which is required for various processes during development, such as dorsal patterning, determination of left/right symmetry or myelination in the central nervous system. Acts downstream of Wnt ligands and upstream of beta-catenin (CTNNB1). Required for canonical Wnt signaling pathway during patterning in the dorsal spinal cord by promoting the aggregation of Disheveled (Dvl) complexes, thereby clustering and formation of Wnt receptor signalosomes and potentiating Wnt activity. During dorsal patterning of the spinal cord, inhibits oligodendrocytes differentiation via interaction with PIP5K1A. Also regulates non-canonical Wnt signaling pathway. Acts downstream of PITX2 in the developing gut and is required for left/right asymmetry within dorsal mesentery: affects mesenchymal condensation by lengthening cadherin-based junctions through WNT5A and non-canonical Wnt signaling, inducing polarized condensation in the left dorsal mesentery necessary to initiate gut rotation. Together with DAAM1, required for myocardial maturation and sarcomere assembly. Is a regulator of actin nucleation and elongation, filopodia formation and podocyte migration. This Mus musculus (Mouse) protein is Disheveled-associated activator of morphogenesis 2.